The sequence spans 44 residues: Brevinin-1PLa (44 aa).

Positions 1 to 18 (NAEEERRDEPDETDVEVE) are excised as a propeptide. Cysteines 38 and 44 form a disulfide.

As to expression, expressed by the skin glands.

It localises to the secreted. Its function is as follows. Antimicrobial peptide. The polypeptide is Brevinin-1PLa (Lithobates palustris (Pickerel frog)).